The primary structure comprises 129 residues: Serum amyloid A protein (129 aa).

Positions 1 to 18 (MKLFTGLVFCSLVLGVSS) are cleaved as a signal peptide. Gln19 bears the Pyrrolidone carboxylic acid mark. The interval 88 to 129 (FFRHGNSGHGAEDSKADQAANEWGRSGKDPNHFRPAGLPSKY) is disordered. Residues 112-129 (RSGKDPNHFRPAGLPSKY) constitute a propeptide, often cleaved during amyloidogenesis.

The protein belongs to the SAA family. In terms of tissue distribution, expressed by the liver; secreted in plasma.

Its subcellular location is the secreted. Functionally, major acute phase reactant. Apolipoprotein of the HDL complex. This is Serum amyloid A protein (SAA1) from Felis catus (Cat).